The chain runs to 156 residues: Snaclec A6 (156 aa).

The N-terminal stretch at 1–23 (MGRSISVSFGLLVVFLSLSGTGA) is a signal peptide. 3 disulfides stabilise this stretch: cysteine 27–cysteine 38, cysteine 55–cysteine 154, and cysteine 129–cysteine 146. Residues 34-155 (HEGHCYKVFN…CGKPYRFTCE (122 aa)) enclose the C-type lectin domain.

The protein belongs to the snaclec family. In terms of assembly, heterodimer; disulfide-linked. Expressed by the venom gland.

It localises to the secreted. Interferes with one step of hemostasis (modulation of platelet aggregation, or coagulation cascade, for example). In Macrovipera lebetinus (Levantine viper), this protein is Snaclec A6.